The chain runs to 414 residues: 3-oxoacyl-[acyl-carrier-protein] synthase 2 (414 aa).

A Ketosynthase family 3 (KS3) domain is found at 4 to 411 (NIRVVITGMG…GHNAVLVFKK (408 aa)). Active-site for beta-ketoacyl synthase activity residues include cysteine 165, histidine 304, and histidine 341.

Belongs to the thiolase-like superfamily. Beta-ketoacyl-ACP synthases family.

It carries out the reaction a fatty acyl-[ACP] + malonyl-[ACP] + H(+) = a 3-oxoacyl-[ACP] + holo-[ACP] + CO2. The enzyme catalyses (9Z)-hexadecenoyl-[ACP] + malonyl-[ACP] + H(+) = 3-oxo-(11Z)-octadecenoyl-[ACP] + holo-[ACP] + CO2. The protein operates within lipid metabolism; fatty acid biosynthesis. Its function is as follows. Involved in the type II fatty acid elongation cycle. Catalyzes the elongation of a wide range of acyl-ACP by the addition of two carbons from malonyl-ACP to an acyl acceptor. Can efficiently catalyze the conversion of palmitoleoyl-ACP (cis-hexadec-9-enoyl-ACP) to cis-vaccenoyl-ACP (cis-octadec-11-enoyl-ACP), an essential step in the thermal regulation of fatty acid composition. This chain is 3-oxoacyl-[acyl-carrier-protein] synthase 2 (fabF), found in Staphylococcus aureus (strain MRSA252).